Consider the following 2822-residue polypeptide: Piezo-type mechanosensitive ion channel component 2 (2822 aa).

Topologically, residues 1 to 12 (MASEVVCGLIFR) are cytoplasmic. The helical transmembrane segment at 13 to 24 (LLLPICLAVACA) threads the bilayer. Residues 25-30 (FRYNGL) lie on the Extracellular side of the membrane. The helical transmembrane segment at 31–43 (SFVYLIYLLLIPL) threads the bilayer. Over 44 to 50 (FSEPTKA) the chain is Cytoplasmic. The chain crosses the membrane as a helical span at residues 51–76 (TMQGHTGRLLQSLCITSLSFLLLHII). Residues 77–122 (FHITLASLEAQHRITPAYNCSTWEKTFRQIGFESLKGADAGNGIRV) are Extracellular-facing. N-linked (GlcNAc...) asparagine glycosylation occurs at Asn95. A helical membrane pass occupies residues 123-141 (FVPDIGMFIASLTIWLVCR). The Cytoplasmic segment spans residues 142–221 (TIVKKPDTEE…KEFIGNMITT (80 aa)). Residues 222–237 (AGKVVVTILLGSSGMM) traverse the membrane as a helical segment. Topologically, residues 238–240 (LPS) are extracellular. A helical membrane pass occupies residues 241–258 (LTSAVYFFVFLGLCTWWS). Residues 259 to 264 (WCRTFD) are Cytoplasmic-facing. Residues 265–287 (PLLFGCLCVLLAIFTAGHLIGLY) form a helical membrane-spanning segment. At 288 to 335 (LYQFQFFQEAVPPNDYYARLFGIKSVIQTDCASTWKIIVNPDLSWYHH) the chain is on the extracellular side. The chain crosses the membrane as a helical span at residues 336 to 355 (ANPILLLVMYYTLATLIRIW). The Cytoplasmic portion of the chain corresponds to 356 to 492 (LQEPLVQEEM…SVRMHAMVAV (137 aa)). A disordered region spans residues 450–481 (YRWEPSEESSEKKEEEEDKREDSEGEGSQEEK). Residues 455 to 482 (SEESSEKKEEEEDKREDSEGEGSQEEKR) are a coiled coil. Over residues 463-477 (EEEEDKREDSEGEGS) the composition is skewed to acidic residues. Residues 493–514 (FQFIMKQSYICALIAMMAWSIT) traverse the membrane as a helical segment. Topologically, residues 515–519 (YHSWL) are extracellular. A helical membrane pass occupies residues 520-531 (TFVLLIWSCTLW). Topologically, residues 532–535 (MIRN) are cytoplasmic. The chain crosses the membrane as a helical span at residues 536-562 (RRKYAMISSPFMVVYANLLLVLQYIWS). Over 563–583 (FELPEIKKVPGFLEKKEPGEL) the chain is Extracellular. The chain crosses the membrane as a helical span at residues 584-614 (ASKILFTITFWLLLRQHLTEQKALREKEALL). The Cytoplasmic portion of the chain corresponds to 615 to 689 (SEVKIGSQEL…GNLVVALFIK (75 aa)). Acidic residues-rich tracts occupy residues 624-633 (LEEKEDEELQ) and 643-652 (EKEEEEEEEI). The disordered stretch occupies residues 624 to 668 (LEEKEDEELQDVQVEGEPTEKEEEEEEEIKEERHEVKKEEEEEVE). Basic and acidic residues predominate over residues 653–662 (KEERHEVKKE). A helical membrane pass occupies residues 690 to 703 (YWIYVCGGMFFFVS). Topologically, residues 704–709 (FEGKIV) are extracellular. Residues 710 to 728 (MYKIIYMVLFLFCVALYQV) traverse the membrane as a helical segment. At 729 to 737 (HYEWWRKIL) the chain is on the cytoplasmic side. The helical transmembrane segment at 738-757 (KYFWMSVVIYTMLVLIFIYT) threads the bilayer. Residues 758–789 (YQFENFPGLWQNMTGLKKEKLEDLGLKQFTVA) are Extracellular-facing. The chain crosses the membrane as a helical span at residues 790–811 (ELFTRIFIPTSFLLVCILHLHY). Residues 812–957 (FHDRFLELTD…QVFMWWILEL (146 aa)) are Cytoplasmic-facing. Ser856 carries the post-translational modification Phosphoserine. Basic and acidic residues predominate over residues 875 to 901 (QKLAESGEERPEECVKKTEKGEAGKDS). The interval 875–919 (QKLAESGEERPEECVKKTEKGEAGKDSDESEEEEDEEEESEEEES) is disordered. Acidic residues predominate over residues 902-919 (DESEEEEDEEEESEEEES). A helical transmembrane segment spans residues 958 to 973 (HIIKIVSSYIIWVTVK). Topologically, residues 974–979 (EVSLFN) are extracellular. A helical transmembrane segment spans residues 980–989 (YVFLISWAFA). Residues 990–997 (LPYAKLRR) lie on the Cytoplasmic side of the membrane. The helical transmembrane segment at 998 to 1018 (AASSVCTVWTCVIIVCKMLYQ) threads the bilayer. Residues 1019–1074 (LQTIKPENFSVNCSLPNENQTNIPLHELNKSLLYSAPVDPTEWVGLRKSSPLLVYL) are Extracellular-facing. Asn1030 carries N-linked (GlcNAc...) asparagine glycosylation. The cysteines at positions 1031 and 1209 are disulfide-linked. A helical transmembrane segment spans residues 1075 to 1099 (RNNLLMLAILAFEVTVYRHQEYYRG). The Cytoplasmic portion of the chain corresponds to 1100-1140 (RNNLTAPVSKTIFHDITRLHLDDGLINCAKYFVNYFFYKFG). Residues 1141–1155 (LETCFLMSVNVIGQR) form a helical membrane-spanning segment. Over 1156-1157 (MD) the chain is Extracellular. The helical transmembrane segment at 1158 to 1171 (FYAMIHACWLIGVL) threads the bilayer. At 1172 to 1182 (YRRRRKAIAEV) the chain is on the cytoplasmic side. The chain crosses the membrane as a helical span at residues 1183–1202 (WPKYCCFLACIITFQYFVCI). At 1203-1239 (GIPPAPCRDYPWRFKGAYFNDNIIKWLYFPDFIVRPN) the chain is on the extracellular side. A helical transmembrane segment spans residues 1240-1260 (PVFLVYDFMLLLCASLQRQIF). The Cytoplasmic portion of the chain corresponds to 1261–1314 (EDENKAAVRIMAGDNVEICMNLDAASFSQHNPVPDFIHCRSYLDMSKVIIFSYL). A helical membrane pass occupies residues 1315-1327 (FWFVLTIIFITGT). At 1328–1333 (TRISIF) the chain is on the extracellular side. The chain crosses the membrane as a helical span at residues 1334 to 1346 (CMGYLVACFYFLL). The Cytoplasmic segment spans residues 1347–1355 (FGGDLLLKP). The chain crosses the membrane as a helical span at residues 1356–1381 (IKSILRYWDWLIAYNVFVITMKNILS). The Extracellular segment spans residues 1382–1430 (IGACGYIGALVRNSCWLIQAFSLACTVKGYQMPEDDSRCKLPSGEAGII). The helical transmembrane segment at 1431-1447 (WDSICFAFLLLQRRVFM) threads the bilayer. Over 1448–1991 (SYYFLHVVAD…YAMYNTLVAR (544 aa)) the chain is Cytoplasmic. Residues 1475 to 1515 (TIVKAVKARIEEEKKSMDQLKRQMDRIKARQQKYKKGKERM) are a coiled coil. 2 disordered regions span residues 1505–1551 (QQKY…KKKQ) and 1611–1653 (LRQR…KKSD). Positions 1611–1621 (LRQRRKEKKKL) are enriched in basic residues. Positions 1622 to 1633 (AREEQKERRKGS) are enriched in basic and acidic residues. The helical transmembrane segment at 1992–2006 (SEMVCYFVIILNHMT) threads the bilayer. Residues 2007 to 2013 (SASIITL) are Extracellular-facing. A helical transmembrane segment spans residues 2014–2025 (LLPILIFLWAML). Over 2026-2031 (SVPRPS) the chain is Cytoplasmic. The chain crosses the membrane as a helical span at residues 2032–2053 (RRFWMMAIVYTEVAIVVKYFFQ). Residues 2054–2086 (FGFFPWNKDLEIYKERPYFPPNIIGVEKKEGYV) are Extracellular-facing. A helical transmembrane segment spans residues 2087-2105 (LYDLIQLLALFFHRSILKC). The Cytoplasmic portion of the chain corresponds to 2106-2259 (HGLWDEDDIV…HPDYSAVTDV (154 aa)). Disordered regions lie at residues 2120–2139 (DKEG…GSSD) and 2164–2205 (IRRK…SVLS). Residues 2170–2197 (CSSSQISPRSSFSSNRSKRGSTSTRNSS) are compositionally biased toward low complexity. Residues 2260 to 2279 (YVLMFLADTVDFIIIVFGFW) traverse the membrane as a helical segment. The Extracellular portion of the chain corresponds to 2280-2301 (AFGKHSAAADITSSLSEDQVPG). The chain crosses the membrane as a helical span at residues 2302 to 2322 (PFLVMVLIQFGTMVVDRALYL). At 2323–2326 (RKTV) the chain is on the cytoplasmic side. The chain crosses the membrane as a helical span at residues 2327–2350 (LGKVIFQVILVFGIHFWMFFILPG). The Extracellular portion of the chain corresponds to 2351-2359 (VTERKFSQN). The chain crosses the membrane as a helical span at residues 2360-2382 (LVAQLWYFVKCVYFGLSAYQIRC). Topologically, residues 2383–2467 (GYPTRVLGNF…YPQPRGQKKK (85 aa)) are cytoplasmic. Residues 2468-2491 (KAVKYGMGGMIIVLLICIVWFPLL) traverse the membrane as a helical segment. At 2492–2739 (FMSLIKSVAG…PSLGFLAGYG (248 aa)) the chain is on the extracellular side. Asn2692 is a glycosylation site (N-linked (GlcNAc...) asparagine). The helical transmembrane segment at 2740 to 2760 (IMGLYASVVLVIGKFVREFFS) threads the bilayer. The Cytoplasmic portion of the chain corresponds to 2761–2822 (GISHSIMFEE…MIKWTREKTN (62 aa)).

Belongs to the PIEZO (TC 1.A.75) family. As to quaternary structure, homotrimer; the homotrimer forms a propeller-shaped Piezo channel with a cation-ion conducting pore. Heterotrimeric interaction may occur between PIEZO1 and PIEZO2. Interacts with STOM13. Interacts with TMC7; the interaction inhibits PIEZO2-conducted mechanically activated currents. Interacts with TMC1; the interaction may be part of the MET complex. Interacts with MDFIC (via C-terminus); the interaction prolongs Piezo channel inactivation. Interacts with MDFI (via C-terminus); the interaction prolongs Piezo channel inactivation. As to expression, expressed in bladder, colon, and lung, but less abundant in kidney or skin. Strong expression is observed in dorsal root ganglia (DRG) sensory neurons. Expressed in a wide range of cutaneous low-threshold mechanoreceptors (LTMRs), including Merkel cells and Meissner's corpuscles. Expressed in sensory neurons. Expressed in cochlear inner and outer hair cells and vestibular organ hair cells. Expressed in pulmonary neuroepithelial cell bodies. Expressed in bladder urothelium and sensory neurons of the lower urinary tract. Expressed in sensory endings of proprioceptors innervating muscle spindles and Golgi tendon organs.

The protein localises to the cell membrane. The enzyme catalyses Ca(2+)(in) = Ca(2+)(out). With respect to regulation, regulated by auxillary subunits MDFIC and MDFI. Channel activity is inhibited by TMEM120aa. Phosphatidic acid and lysophosphatidic acid inhibit Piezo2 channel activity. In terms of biological role, pore-forming subunit of the mechanosensitive non-specific cation Piezo channel required for rapidly adapting mechanically activated (MA) currents and has a key role in sensing touch and tactile pain. Piezo channels are homotrimeric three-blade propeller-shaped structures that utilize a cap-motion and plug-and-latch mechanism to gate their ion-conducting pathways. Expressed in sensory neurons, is essential for diverse physiological processes, including respiratory control, systemic metabolism, urinary function, and proprioception. Mediates airway stretch sensing, enabling efficient respiration at birth and maintaining normal breathing in adults. It regulates brown and beige adipose tissue morphology and function, preventing systemic hypermetabolism. In the lower urinary tract, acts as a sensor in both the bladder urothelium and innervating sensory neurons and is required for bladder-stretch sensing and urethral micturition reflexes, ensuring proper urinary function. Additionally, Piezo2 serves as the principal mechanotransducer in proprioceptors, facilitating proprioception and coordinated body movements. In inner ear hair cells, PIEZO1/2 subunits may constitute part of the mechanotransducer (MET) non-selective cation channel complex where they may act as pore-forming ion-conducting component in the complex. Required for Merkel-cell mechanotransduction. Plays a major role in light-touch mechanosensation. The protein is Piezo-type mechanosensitive ion channel component 2 of Mus musculus (Mouse).